Consider the following 430-residue polypeptide: Putative glycylpeptide N-tetradecanoyltransferase 2 (430 aa).

Tetradecanoyl-CoA-binding positions include 47–50 (HKFW), 181–183 (LCV), and 189–193 (SKGLA). The Proton acceptor; via carboxylate role is filled by leucine 430.

The protein belongs to the NMT family.

The enzyme catalyses N-terminal glycyl-[protein] + tetradecanoyl-CoA = N-tetradecanoylglycyl-[protein] + CoA + H(+). In terms of biological role, may add a myristoyl group to the N-terminal glycine residue of certain cellular proteins. This chain is Putative glycylpeptide N-tetradecanoyltransferase 2 (NMT2), found in Arabidopsis thaliana (Mouse-ear cress).